Here is a 401-residue protein sequence, read N- to C-terminus: UDP-GlcNAc:betaGal beta-1,3-N-acetylglucosaminyltransferase 9 (401 aa).

The Cytoplasmic segment spans residues 1 to 10 (MRRRLRLRRE). Residues 11 to 31 (ALLTLLLGATLGLLLYAQQEG) form a helical; Signal-anchor for type II membrane protein membrane-spanning segment. Topologically, residues 32-401 (AAPTTSAPRA…VPAGPFQWGP (370 aa)) are lumenal. Residues 33 to 85 (APTTSAPRAQGRAAPGPTPGLRVFQAPDTGAAPPAYEGDTPEPPTPTGPFDFG) form a disordered region. Positions 38–47 (APRAQGRAAP) are enriched in low complexity.

It belongs to the glycosyltransferase 31 family.

The protein localises to the golgi apparatus membrane. The sequence is that of UDP-GlcNAc:betaGal beta-1,3-N-acetylglucosaminyltransferase 9 from Bos taurus (Bovine).